A 237-amino-acid chain; its full sequence is Synapse differentiation-inducing gene protein 1-like (237 aa).

Disordered stretches follow at residues Met1–Tyr23, Ala84–Ala111, and Glu127–Cys148. Topologically, residues Met1–Leu161 are extracellular. Over residues Gln129–Cys148 the composition is skewed to acidic residues. Residues Gly162 to Phe182 traverse the membrane as a helical segment. Over Ser183–Arg204 the chain is Cytoplasmic. Residues Ala205 to Val225 form a helical membrane-spanning segment. Residues Ala226–Gly237 are Extracellular-facing.

The protein belongs to the CD225/Dispanin family. As to expression, expression is restricted to the caudate-putamen. Down-regulated in R6/2 transgenic mice, a model for Huntington disease.

It is found in the membrane. It localises to the golgi apparatus. The protein resides in the cis-Golgi network. The polypeptide is Synapse differentiation-inducing gene protein 1-like (Syndig1l) (Mus musculus (Mouse)).